The sequence spans 227 residues: Fibrillarin-like rRNA/tRNA 2'-O-methyltransferase (227 aa).

Residues 82–83 (TT), 100–101 (EF), 125–126 (DA), and 145–148 (DVAQ) each bind S-adenosyl-L-methionine.

The protein belongs to the methyltransferase superfamily. Fibrillarin family. In terms of assembly, interacts with nop5. Component of box C/D small ribonucleoprotein (sRNP) particles that contain rpl7ae, FlpA and nop5, plus a guide RNA.

In terms of biological role, involved in pre-rRNA and tRNA processing. Utilizes the methyl donor S-adenosyl-L-methionine to catalyze the site-specific 2'-hydroxyl methylation of ribose moieties in rRNA and tRNA. Site specificity is provided by a guide RNA that base pairs with the substrate. Methylation occurs at a characteristic distance from the sequence involved in base pairing with the guide RNA. In Methanosarcina acetivorans (strain ATCC 35395 / DSM 2834 / JCM 12185 / C2A), this protein is Fibrillarin-like rRNA/tRNA 2'-O-methyltransferase.